The following is a 644-amino-acid chain: Chaperone protein DnaK (644 aa).

The residue at position 199 (threonine 199) is a Phosphothreonine; by autocatalysis. The segment at 603–644 is disordered; it reads YAKKSSEGQAAQGQTQSQESTKPAEEGVVDAEFEEVKEEDKK. The segment covering 609-623 has biased composition (polar residues); it reads EGQAAQGQTQSQEST. Positions 629-644 are enriched in acidic residues; the sequence is GVVDAEFEEVKEEDKK.

Belongs to the heat shock protein 70 family.

Acts as a chaperone. The polypeptide is Chaperone protein DnaK (Legionella pneumophila (strain Corby)).